We begin with the raw amino-acid sequence, 267 residues long: Tryptophan synthase alpha chain (267 aa).

Catalysis depends on proton acceptor residues E47 and D58.

This sequence belongs to the TrpA family. In terms of assembly, tetramer of two alpha and two beta chains.

The enzyme catalyses (1S,2R)-1-C-(indol-3-yl)glycerol 3-phosphate + L-serine = D-glyceraldehyde 3-phosphate + L-tryptophan + H2O. The protein operates within amino-acid biosynthesis; L-tryptophan biosynthesis; L-tryptophan from chorismate: step 5/5. Functionally, the alpha subunit is responsible for the aldol cleavage of indoleglycerol phosphate to indole and glyceraldehyde 3-phosphate. This chain is Tryptophan synthase alpha chain, found in Chlorobium phaeovibrioides (strain DSM 265 / 1930) (Prosthecochloris vibrioformis (strain DSM 265)).